The following is a 551-amino-acid chain: Formate--tetrahydrofolate ligase (551 aa).

ATP is bound at residue 54–61 (TPPGEGKT).

This sequence belongs to the formate--tetrahydrofolate ligase family.

The enzyme catalyses (6S)-5,6,7,8-tetrahydrofolate + formate + ATP = (6R)-10-formyltetrahydrofolate + ADP + phosphate. Its pathway is one-carbon metabolism; tetrahydrofolate interconversion. The protein is Formate--tetrahydrofolate ligase of Myxococcus xanthus (strain DK1622).